Reading from the N-terminus, the 521-residue chain is Acidic amino acid decarboxylase GADL1 (521 aa).

A compositionally biased stretch (basic and acidic residues) spans 1 to 12 (MSLLPDRERAPD). A disordered region spans residues 1–20 (MSLLPDRERAPDGDISPQEM). Lys333 is subject to N6-(pyridoxal phosphate)lysine.

The protein belongs to the group II decarboxylase family. As to quaternary structure, homodimer. It depends on pyridoxal 5'-phosphate as a cofactor. As to expression, expressed at highest levels in skeletal muscles. Also detected heart, spleen and rumen.

It carries out the reaction L-aspartate + H(+) = beta-alanine + CO2. The enzyme catalyses 3-sulfino-L-alanine + H(+) = hypotaurine + CO2. The catalysed reaction is L-cysteate + H(+) = taurine + CO2. Catalyzes the decarboxylation of L-aspartate, 3-sulfino-L-alanine (cysteine sulfinic acid), and L-cysteate to beta-alanine, hypotaurine and taurine, respectively. The preferred substrate is L-aspartate. Does not exhibit any decarboxylation activity toward glutamate. This is Acidic amino acid decarboxylase GADL1 (GADL1) from Bos taurus (Bovine).